Here is a 157-residue protein sequence, read N- to C-terminus: Putative pre-16S rRNA nuclease (157 aa).

Belongs to the YqgF nuclease family.

The protein localises to the cytoplasm. Its function is as follows. Could be a nuclease involved in processing of the 5'-end of pre-16S rRNA. This is Putative pre-16S rRNA nuclease from Parasynechococcus marenigrum (strain WH8102).